The following is a 160-amino-acid chain: F-box protein At1g15015 (160 aa).

Residues 1–44 enclose the F-box domain; it reads MDVTLPHHVVEDILERLPVKTLRKFKCVCSTWRSTIDSQRFKDR.

This chain is F-box protein At1g15015, found in Arabidopsis thaliana (Mouse-ear cress).